The sequence spans 365 residues: Peptide chain release factor 2 (365 aa).

Glutamine 251 bears the N5-methylglutamine mark.

The protein belongs to the prokaryotic/mitochondrial release factor family. Methylated by PrmC. Methylation increases the termination efficiency of RF2.

It localises to the cytoplasm. Peptide chain release factor 2 directs the termination of translation in response to the peptide chain termination codons UGA and UAA. The protein is Peptide chain release factor 2 of Sulfurimonas denitrificans (strain ATCC 33889 / DSM 1251) (Thiomicrospira denitrificans (strain ATCC 33889 / DSM 1251)).